We begin with the raw amino-acid sequence, 433 residues long: MASLTTALPNKAVVAHFMMGLTYNYAQSDFQNDIQNAISLGLDGFVLNFGNDSWMMSKLTLMYNAADALNLQFLLYLNLDMSEMSTVPASTLVTYVQTFANRGHQARINNNVVVGTFLGQDINFGQSSVNQGWQVAFKNALASAGINIFFMPTWPLDASTIYQTYPVADGFCKWNCWPYYTSSPTSDAEDLVYIQNSKATNKKYMATVSPIFYTHFTSKNYSFFSEGLWFTRWMQLIKDQPNYVQVLTWNDYGESTYIGPTNYAADFPVIGSNSHEWVDSFTHAPLSYSLPLFIQMYKQNTTGLPSNFSGISQLYVTYRVHSKNATASSDSIPRPDNYQNSSDVISVISFAKSSYTLRVSVNGTVLGTTNVNAGVQSANVSFIVNNTAAAGLPLFQILNGTTVIAQGYGPLNILGNNSVVLYNFNFCTTRISW.

This sequence belongs to the glycosyl hydrolase 71 family.

It localises to the ascus epiplasm. It carries out the reaction Endohydrolysis of (1-&gt;3)-alpha-D-glucosidic linkages in isolichenin, pseudonigeran and nigeran.. Promotes the release of ascospores from asci by hydrolyzing 1,3-alpha-glucan in the ascus wall. This chain is Ascus wall endo-1,3-alpha-glucanase, found in Schizosaccharomyces pombe (strain 972 / ATCC 24843) (Fission yeast).